The chain runs to 165 residues: Lipoprotein signal peptidase (165 aa).

Helical transmembrane passes span 7–27, 46–66, 72–92, and 100–120; these read YFSS…LVLL, AVTS…FSFL, WQRY…IYLL, and LFCW…IDRV. Residues D127 and D145 contribute to the active site. The helical transmembrane segment at 136 to 156 threads the bilayer; it reads WHWPAFNIADSAICIGAVLFI.

Belongs to the peptidase A8 family.

The protein localises to the cell inner membrane. It catalyses the reaction Release of signal peptides from bacterial membrane prolipoproteins. Hydrolyzes -Xaa-Yaa-Zaa-|-(S,diacylglyceryl)Cys-, in which Xaa is hydrophobic (preferably Leu), and Yaa (Ala or Ser) and Zaa (Gly or Ala) have small, neutral side chains.. Its pathway is protein modification; lipoprotein biosynthesis (signal peptide cleavage). In terms of biological role, this protein specifically catalyzes the removal of signal peptides from prolipoproteins. The protein is Lipoprotein signal peptidase of Janthinobacterium sp. (strain Marseille) (Minibacterium massiliensis).